The chain runs to 1325 residues: NHS-like protein 3 (1325 aa).

Positions 53-85 form a coiled coil; that stretch reads LEDLHTEAQEGLKILQQEEEDTSSKERNESLEN. Disordered regions lie at residues 68–92, 111–131, 291–348, 368–570, 595–614, 829–891, 935–981, 1084–1138, 1243–1272, and 1293–1313; these read QQEEEDTSSKERNESLENDSTSGHS, QGSTFKPLNPVKRLDKSKRRS, CSAS…KGKC, MSVS…AKTS, QTNTTSSEPLKFSPPLTTVK, EVNG…MEES, LLST…VSEF, VGED…SSAV, GTKKPIKVPPPVAKKPVHGSNPPNKMENAT, and SDQVHPAGQRAQSLGNQEQAS. Residues 296–334 show a composition bias toward low complexity; that stretch reads ASKGSMASASPSSSRSGSGTNQAPPTTSPSRSNSQSSET. Residues 335–344 show a composition bias toward polar residues; it reads IVSNSSTISS. Residues 369 to 378 show a composition bias toward low complexity; the sequence is SVSSSSSWKS. Over residues 400–412 the composition is skewed to polar residues; sequence VRNSHSFSRSLSV. Over residues 428–447 the composition is skewed to basic and acidic residues; sequence LHHENMQRQREQGDIQDPKD. Positions 450-460 are enriched in polar residues; that stretch reads PNNNEQTNRDI. The span at 515–524 shows a compositional bias: basic and acidic residues; it reads KTRECGENFD. The span at 528 to 541 shows a compositional bias: low complexity; that stretch reads SPSSGYSSQSGTPT. The segment covering 834–850 has biased composition (pro residues); that stretch reads SPPPSPPPEHHPPPPPI. 2 stretches are compositionally biased toward polar residues: residues 935 to 948 and 1088 to 1100; these read LLSTNVSDMDSSPE and QVNNDSKPSTEPT. Over residues 1124–1138 the composition is skewed to low complexity; the sequence is KSNSPAKSSSASSAV. Positions 1302–1311 are enriched in polar residues; the sequence is RAQSLGNQEQ.

In terms of biological role, able to directly activate the TNF-NFkappaB signaling pathway. The protein is NHS-like protein 3 (nhsl3) of Danio rerio (Zebrafish).